The primary structure comprises 102 residues: MAKQKIRIRLKAYDHRVIDQSAEKIVETAKRSGADVSGPIPLPTEKSVYTIIRAVHKYKDSREQFEQRTHKRLIDIVNPTPKTVDALMGLNLPSGVDIEIKL.

It belongs to the universal ribosomal protein uS10 family. In terms of assembly, part of the 30S ribosomal subunit.

In terms of biological role, involved in the binding of tRNA to the ribosomes. This Staphylococcus aureus (strain JH9) protein is Small ribosomal subunit protein uS10.